The primary structure comprises 200 residues: Imidazole glycerol phosphate synthase subunit HisH (200 aa).

In terms of domain architecture, Glutamine amidotransferase type-1 spans 3-200 (DVALIDAGGA…LHNFLEMSFP (198 aa)). The active-site Nucleophile is the Cys78. Catalysis depends on residues His179 and Glu181.

As to quaternary structure, heterodimer of HisH and HisF.

The protein localises to the cytoplasm. It carries out the reaction 5-[(5-phospho-1-deoxy-D-ribulos-1-ylimino)methylamino]-1-(5-phospho-beta-D-ribosyl)imidazole-4-carboxamide + L-glutamine = D-erythro-1-(imidazol-4-yl)glycerol 3-phosphate + 5-amino-1-(5-phospho-beta-D-ribosyl)imidazole-4-carboxamide + L-glutamate + H(+). It catalyses the reaction L-glutamine + H2O = L-glutamate + NH4(+). Its pathway is amino-acid biosynthesis; L-histidine biosynthesis; L-histidine from 5-phospho-alpha-D-ribose 1-diphosphate: step 5/9. Its function is as follows. IGPS catalyzes the conversion of PRFAR and glutamine to IGP, AICAR and glutamate. The HisH subunit catalyzes the hydrolysis of glutamine to glutamate and ammonia as part of the synthesis of IGP and AICAR. The resulting ammonia molecule is channeled to the active site of HisF. This chain is Imidazole glycerol phosphate synthase subunit HisH, found in Xanthomonas oryzae pv. oryzae (strain MAFF 311018).